A 233-amino-acid polypeptide reads, in one-letter code: Lectin (233 aa).

N-linked (GlcNAc...) asparagine glycans are attached at residues N26 and N108. Mn(2+) is bound by residues E118 and D120. The Ca(2+) site is built by D120, W122, N124, and E129. Residues E129 and H134 each coordinate Mn(2+).

Belongs to the leguminous lectin family. As to quaternary structure, monomer.

The protein localises to the secreted. Functionally, has metal-independent hemagglutinating activity towards erythrocytes from rabbit and human. Hemagglutinating activity is inhibited by glycoproteins fetuin, asialo-fetuin, thyroglobulin and azocasein but not by free carbohydrates. Inhibits ADP- and epinephrin-induced but not collagen-, fibrinogen, thrombin- or arachidonic acid-induced platelet aggregation in vitro. Has anticoagulant activity in vitro. The sequence is that of Lectin from Bauhinia forficata (Brazilian orchid-tree).